Consider the following 200-residue polypeptide: Cysteine dioxygenase type 1 (200 aa).

The Fe cation site is built by histidine 86, histidine 88, and histidine 140. A cross-link (3'-(S-cysteinyl)-tyrosine (Cys-Tyr)) is located at residues 93 to 157 (CFLKMLQGNL…TEPAVSLHLY (65 aa)).

The protein belongs to the cysteine dioxygenase family. As to quaternary structure, monomer. Requires Fe(2+) as cofactor. Ni(2+) serves as cofactor. Zn(2+) is required as a cofactor. In terms of processing, the thioether cross-link between Cys-93 and Tyr-157 plays a structural role through stabilizing the Fe(2+) ion, and prevents the production of highly damaging free hydroxyl radicals by holding the oxygen radical via hydroxyl hydrogen. In terms of tissue distribution, highly expressed in liver and placenta. Low expression in heart, brain and pancreas. Also detected in hepatoblastoma Hep-G2 cells.

The enzyme catalyses L-cysteine + O2 = 3-sulfino-L-alanine + H(+). It functions in the pathway organosulfur biosynthesis; taurine biosynthesis; hypotaurine from L-cysteine: step 1/2. Catalyzes the oxidation of cysteine to cysteine sulfinic acid with addition of molecular dioxygen. The sequence is that of Cysteine dioxygenase type 1 (CDO1) from Homo sapiens (Human).